The following is a 414-amino-acid chain: Probable peptidoglycan glycosyltransferase FtsW (414 aa).

The Cytoplasmic segment spans residues 1-12 (MRLSLPRLKMPR). A helical transmembrane segment spans residues 13–33 (LPGFSILVWISTALKGWVMGS). The Periplasmic segment spans residues 34 to 47 (REKDTDSLIMYDRT). The chain crosses the membrane as a helical span at residues 48–68 (LLWLTFGLAAIGFIMVTSASM). The Cytoplasmic segment spans residues 69-86 (PIGQRLTNDPFFFAKRDG). The chain crosses the membrane as a helical span at residues 87 to 107 (VYLILAFILAIITLRLPMEFW). Topologically, residues 108–111 (QRYS) are periplasmic. The chain crosses the membrane as a helical span at residues 112–132 (ATMLLGSIILLMIVLVVGSSV). Residues 133–174 (KGASRWIDLGLLRIQPAELTKLSLFCYIANYLVRKGDEVRNN) are Cytoplasmic-facing. Residues 175–194 (LRGFLKPMGVILVLAVLLLA) form a helical membrane-spanning segment. Topologically, residues 195-197 (QPD) are periplasmic. Residues 198–217 (LGTVVVLFVTTLAMLFLAGA) form a helical membrane-spanning segment. Residue lysine 218 is a topological domain, cytoplasmic. The helical transmembrane segment at 219-239 (LWQFIAIIGMGISAVVLLILA) threads the bilayer. Topologically, residues 240–301 (EPYRIRRVTA…PEAHTDFIFA (62 aa)) are periplasmic. The chain crosses the membrane as a helical span at residues 302-322 (IIGEELGYVGVVLALLMVFFV). Residues 323–342 (AFRAMSIGRKALEIDHRFSG) are Cytoplasmic-facing. The helical transmembrane segment at 343–363 (FLACSIGIWFSFQALVNVGAA) threads the bilayer. At 364–373 (AGMLPTKGLT) the chain is on the periplasmic side. A helical membrane pass occupies residues 374–394 (LPLISYGGSSLLIMSTAIMML). Topologically, residues 395–414 (LRIDYETRLEKAQAFVRGSR) are cytoplasmic.

Belongs to the SEDS family. FtsW subfamily.

It is found in the cell inner membrane. The enzyme catalyses [GlcNAc-(1-&gt;4)-Mur2Ac(oyl-L-Ala-gamma-D-Glu-L-Lys-D-Ala-D-Ala)](n)-di-trans,octa-cis-undecaprenyl diphosphate + beta-D-GlcNAc-(1-&gt;4)-Mur2Ac(oyl-L-Ala-gamma-D-Glu-L-Lys-D-Ala-D-Ala)-di-trans,octa-cis-undecaprenyl diphosphate = [GlcNAc-(1-&gt;4)-Mur2Ac(oyl-L-Ala-gamma-D-Glu-L-Lys-D-Ala-D-Ala)](n+1)-di-trans,octa-cis-undecaprenyl diphosphate + di-trans,octa-cis-undecaprenyl diphosphate + H(+). It functions in the pathway cell wall biogenesis; peptidoglycan biosynthesis. Functionally, peptidoglycan polymerase that is essential for cell division. The protein is Probable peptidoglycan glycosyltransferase FtsW of Escherichia coli O157:H7.